A 74-amino-acid chain; its full sequence is Probable molt-inhibiting hormone (74 aa).

3 cysteine pairs are disulfide-bonded: Cys-6–Cys-43, Cys-23–Cys-39, and Cys-26–Cys-52. Alanine amide is present on Ala-74.

It is found in the secreted. Inhibits Y-organs where molting hormone (ecdysteroid) is secreted. A molting cycle is initiated when MIH secretion diminishes or stops. Has little or no hyperglycemic activity. The protein is Probable molt-inhibiting hormone of Jasus lalandii (Cape rock lobster).